The chain runs to 175 residues: Alpha-crystallin B chain (175 aa).

Met1 is modified (N-acetylmethionine). Ser19 is modified (phosphoserine). Residue Ser41 is glycosylated (O-linked (GlcNAc) serine). Phosphoserine occurs at positions 45 and 59. Residues 56 to 164 form the sHSP domain; that stretch reads RAPSWIDTGL…PERTIPITRE (109 aa). Residue His83 participates in Zn(2+) binding. Lys92 is modified (N6-acetyllysine). Zn(2+) contacts are provided by His104, Glu106, His111, and His119. The segment at 142–175 is disordered; the sequence is VLTVNGPRKQAPGPERTIPITREEKPAVTAAPKK. Lys166 carries the post-translational modification N6-acetyllysine. Thr170 carries an O-linked (GlcNAc) threonine glycan.

The protein belongs to the small heat shock protein (HSP20) family. Heteromer composed of three CRYAA and one CRYAB subunits. Aggregates with homologous proteins, including the small heat shock protein HSPB1, to form large heteromeric complexes. Inter-subunit bridging via zinc ions enhances stability, which is crucial as there is no protein turn over in the lens. Interacts with HSPBAP1 and TTN/titin. Interacts with TMEM109; in the cellular response to DNA damage. Interacts with DES; binds rapidly during early stages of DES filament assembly and a reduced binding seen in the later stages. Interacts with TMED10; the interaction mediates the translocation from the cytoplasm into the ERGIC (endoplasmic reticulum-Golgi intermediate compartment) and thereby secretion. Interacts with ATP6V1A and with MTOR, forming a ternary complex. In terms of tissue distribution, lens as well as other tissues.

The protein localises to the cytoplasm. Its subcellular location is the nucleus. It localises to the secreted. It is found in the lysosome. In terms of biological role, may contribute to the transparency and refractive index of the lens. Has chaperone-like activity, preventing aggregation of various proteins under a wide range of stress conditions. In lens epithelial cells, stabilizes the ATP6V1A protein, preventing its degradation by the proteasome. The chain is Alpha-crystallin B chain (CRYAB) from Oryctolagus cuniculus (Rabbit).